An 857-amino-acid polypeptide reads, in one-letter code: Glucans biosynthesis glucosyltransferase H (857 aa).

Helical transmembrane passes span 142-162, 196-216, 515-535, 572-592, 606-626, and 682-702; these read ILLALMIGQTIVAGWYMKGIL, ILILFGILFCWVSAGFWTALM, VFLTGVMSYLSAPLWFLFLVL, LFSTTIVLLFLPKLLSVILIW, TLSMLMEMLFSMLLAPVRMIF, and FLWWLAPIVGSLVLSIPVSVI.

This sequence belongs to the glycosyltransferase 2 family. OpgH subfamily.

The protein localises to the cell inner membrane. It functions in the pathway glycan metabolism; osmoregulated periplasmic glucan (OPG) biosynthesis. Its function is as follows. Involved in the biosynthesis of osmoregulated periplasmic glucans (OPGs). The polypeptide is Glucans biosynthesis glucosyltransferase H (Pseudomonas putida (strain ATCC 700007 / DSM 6899 / JCM 31910 / BCRC 17059 / LMG 24140 / F1)).